A 296-amino-acid polypeptide reads, in one-letter code: Maltose/maltodextrin transport system permease protein MalG (296 aa).

At 1–12 (MAMVQPKSQKLR) the chain is on the cytoplasmic side. Residues 13 to 35 (LLITHLGLLIFIAAIMFPLLMVI) traverse the membrane as a helical segment. The Periplasmic portion of the chain corresponds to 36–88 (AISLREGNFATGSLIPDKISWEHWRLALGFSVEHADGRVTPPPFPVLLWLWNS). Residues 85-281 (LWNSVKIAGI…IPITLVFLLA (197 aa)) enclose the ABC transmembrane type-1 domain. Residues 89-111 (VKIAGITAIGIVALSTTCAYAFA) traverse the membrane as a helical segment. Residues 112-123 (RMRFPGKATLLK) are Cytoplasmic-facing. The chain crosses the membrane as a helical span at residues 124-143 (GMLIFQMFPAVLSLVALYAL). Residues 144-152 (FDRLGQYIP) are Periplasmic-facing. The chain crosses the membrane as a helical span at residues 153–175 (FIGLNTHGGVIFAYLGGIALHVW). Over 176 to 204 (TIKGYFETIDSSLEEAAALDGATPWQAFR) the chain is Cytoplasmic. The chain crosses the membrane as a helical span at residues 205-227 (LVLLPLSVPILAVVFILSFIAAI). The Periplasmic segment spans residues 228–257 (TEVPVASLLLRDVDSYTLAVGMQQYLNPQN). The helical transmembrane segment at 258–280 (YLWGDFAAAAVLSAIPITLVFLL) threads the bilayer. Topologically, residues 281–296 (AQRWLVNGLTAGGVKG) are cytoplasmic.

This sequence belongs to the binding-protein-dependent transport system permease family. MalFG subfamily. The complex is composed of two ATP-binding proteins (MalK), two transmembrane proteins (MalG and MalF) and a solute-binding protein (MalE).

It localises to the cell inner membrane. In terms of biological role, part of the ABC transporter complex MalEFGK involved in maltose/maltodextrin import. Probably responsible for the translocation of the substrate across the membrane. In Salmonella typhimurium (strain LT2 / SGSC1412 / ATCC 700720), this protein is Maltose/maltodextrin transport system permease protein MalG (malG).